Reading from the N-terminus, the 145-residue chain is Basic phospholipase A2 beta-bungarotoxin A2 chain (145 aa).

An N-terminal signal peptide occupies residues 1-17 (MLIFLWCGAVCVSLLGA). A propeptide spanning residues 18 to 25 (ANIPPHPL) is cleaved from the precursor. 6 disulfide bridges follow: Cys-52/Cys-144, Cys-54/Cys-70, Cys-69/Cys-125, Cys-76/Cys-118, Cys-86/Cys-111, and Cys-104/Cys-116. Ca(2+)-binding residues include Tyr-53, Gly-55, and Gly-57. The active site involves His-73. Asp-74 serves as a coordination point for Ca(2+). The active site involves Asp-119.

The protein belongs to the phospholipase A2 family. Group I subfamily. D49 sub-subfamily. Heterodimer; disulfide-linked. The A chains have phospholipase A2 activity and the B chains show homology with the basic protease inhibitors. The A2 chain is found in beta-3 and beta-4 bungarotoxins. The cofactor is Ca(2+). In terms of tissue distribution, expressed by the venom gland.

It is found in the secreted. The catalysed reaction is a 1,2-diacyl-sn-glycero-3-phosphocholine + H2O = a 1-acyl-sn-glycero-3-phosphocholine + a fatty acid + H(+). Its function is as follows. Snake venom phospholipase A2 (PLA2) that inhibits neuromuscular transmission by blocking acetylcholine release from the nerve termini. PLA2 catalyzes the calcium-dependent hydrolysis of the 2-acyl groups in 3-sn-phosphoglycerides. In Bungarus multicinctus (Many-banded krait), this protein is Basic phospholipase A2 beta-bungarotoxin A2 chain.